A 637-amino-acid chain; its full sequence is uncharacterized protein (637 aa).

Positions 7-34 (CDLCRLKKIKCSRGQPRCQTCTLFQADC) form a DNA-binding region, zn(2)-C6 fungal-type. The C2H2-type; degenerate zinc-finger motif lies at 304–327 (SLCRTLCGQACLMAQQLNLHRKQS).

It is found in the nucleus. This is an uncharacterized protein from Schizosaccharomyces pombe (strain 972 / ATCC 24843) (Fission yeast).